A 300-amino-acid polypeptide reads, in one-letter code: C-4 methylsterol oxidase erg25 (300 aa).

Residues T140–T276 form the Fatty acid hydroxylase domain. Residues H154–H158 carry the Histidine box-1 motif. The Histidine box-2 motif lies at H167–H171. The helical transmembrane segment at P186–F206 threads the bilayer. Positions H251–M257 match the Histidine box-3 motif.

The protein belongs to the sterol desaturase family. As to quaternary structure, heterotetramer of erg25, erg26, erg27 and erg28. Erg28 acts as a scaffold to tether erg27 and other 4,4-demethylation-related enzymes, forming a demethylation enzyme complex, in the endoplasmic reticulum. The cofactor is Fe cation.

The protein resides in the endoplasmic reticulum membrane. It carries out the reaction 4,4-dimethyl-5alpha-cholesta-8,24-dien-3beta-ol + 6 Fe(II)-[cytochrome b5] + 3 O2 + 5 H(+) = 4beta-methylzymosterol-4alpha-carboxylate + 6 Fe(III)-[cytochrome b5] + 4 H2O. The enzyme catalyses 4alpha-methylzymosterol + 6 Fe(II)-[cytochrome b5] + 3 O2 + 5 H(+) = 4alpha-carboxyzymosterol + 6 Fe(III)-[cytochrome b5] + 4 H2O. The protein operates within steroid biosynthesis; zymosterol biosynthesis; zymosterol from lanosterol: step 3/6. It functions in the pathway steroid metabolism; ergosterol biosynthesis. C-4 methylsterol oxidase; part of the third module of ergosterol biosynthesis pathway that includes by the late steps of the pathway. Erg25 is a catalytic component of the C-4 demethylation complex that catalyzes the three-step monooxygenation required for the demethylation of 4,4-dimethyl and 4alpha-methylsterols. The third module or late pathway involves the ergosterol synthesis itself through consecutive reactions that mainly occur in the endoplasmic reticulum (ER) membrane. Firstly, the squalene synthase erg9 catalyzes the condensation of 2 farnesyl pyrophosphate moieties to form squalene, which is the precursor of all steroids. Secondly, squalene is converted into lanosterol by the consecutive action of the squalene epoxidase erg1 and the lanosterol synthase erg7. The lanosterol 14-alpha-demethylase erg11/cyp1 catalyzes C14-demethylation of lanosterol to produce 4,4'-dimethyl cholesta-8,14,24-triene-3-beta-ol. In the next steps, a complex process involving various demethylation, reduction and desaturation reactions catalyzed by the C-14 reductase erg24 and the C-4 demethylation complex erg25-erg26-erg27 leads to the production of zymosterol. Erg28 likely functions in the C-4 demethylation complex reaction by tethering erg26 and Erg27 to the endoplasmic reticulum or to facilitate interaction between these proteins. Then, the sterol 24-C-methyltransferase erg6 catalyzes the methyl transfer from S-adenosyl-methionine to the C-24 of zymosterol to form fecosterol. The C-8 sterol isomerase erg2 catalyzes the reaction which results in unsaturation at C-7 in the B ring of sterols and thus converts fecosterol to episterol. The sterol-C5-desaturases erg31 and erg32 then catalyze the introduction of a C-5 double bond in the B ring to produce 5-dehydroepisterol. The C-22 sterol desaturase erg5 further converts 5-dehydroepisterol into ergosta-5,7,22,24(28)-tetraen-3beta-ol by forming the C-22(23) double bond in the sterol side chain. Finally, ergosta-5,7,22,24(28)-tetraen-3beta-ol is substrate of the C-24(28) sterol reductase erg4 to produce ergosterol. In the genus Schizosaccharomyces, a second route exists between lanosterol and fecosterol, via the methylation of lanosterol to eburicol by erg6, followed by C14-demethylation by erg11/cyp1 and C4-demethylation by the demethylation complex erg25-erg26-erg27. The protein is C-4 methylsterol oxidase erg25 of Schizosaccharomyces pombe (strain 972 / ATCC 24843) (Fission yeast).